The primary structure comprises 20 residues: Styelin-A (20 aa).

In terms of tissue distribution, hemocytes and pharyngeal tissues.

Its subcellular location is the secreted. Bactericidal against several Gram-positive and Gram-negative bacteria. This chain is Styelin-A, found in Styela clava (Sea squirt).